The following is a 1456-amino-acid chain: Alpha-2-macroglobulin-like protein 1 (1456 aa).

The first 19 residues, Met-1–Ala-19, serve as a signal peptide directing secretion. N-linked (GlcNAc...) asparagine glycosylation is found at Asn-48, Asn-172, and Asn-868.

The protein belongs to the protease inhibitor I39 (alpha-2-macroglobulin) family. Homotetramer; consists of two dimer pairs that are disulfide-linked. Part of a complex composed of complement component C3, CLCA1/CLCA3, A2ML1/OH and ALB/serum albumin.

The protein resides in the secreted. Its function is as follows. Inhibits protease gelatinolytic complex activity against type 1 collagen. This Mus musculus (Mouse) protein is Alpha-2-macroglobulin-like protein 1.